The following is a 546-amino-acid chain: Protein RDR1 (546 aa).

The zn(2)-C6 fungal-type DNA-binding region spans 20-46 (CVPCRERKRKCNGKSPCEMCVAYGYVC).

It is found in the nucleus. Functionally, transcriptional repressor of multidrug resistance genes, such as PDR5. Required for growth on non-fermentable carbon sources like lactate or glycerol. The sequence is that of Protein RDR1 (RDR1) from Saccharomyces cerevisiae (strain ATCC 204508 / S288c) (Baker's yeast).